The sequence spans 272 residues: 4-hydroxy-tetrahydrodipicolinate reductase (272 aa).

NAD(+) is bound by residues 10 to 15, glutamate 36, 100 to 102, and 124 to 127; these read GAGGRM, GTT, and SGNM. Histidine 157 functions as the Proton donor/acceptor in the catalytic mechanism. Histidine 158 lines the (S)-2,3,4,5-tetrahydrodipicolinate pocket. The Proton donor role is filled by lysine 161. Residue 167–168 coordinates (S)-2,3,4,5-tetrahydrodipicolinate; it reads GT.

Belongs to the DapB family.

It is found in the cytoplasm. The enzyme catalyses (S)-2,3,4,5-tetrahydrodipicolinate + NAD(+) + H2O = (2S,4S)-4-hydroxy-2,3,4,5-tetrahydrodipicolinate + NADH + H(+). It catalyses the reaction (S)-2,3,4,5-tetrahydrodipicolinate + NADP(+) + H2O = (2S,4S)-4-hydroxy-2,3,4,5-tetrahydrodipicolinate + NADPH + H(+). Its pathway is amino-acid biosynthesis; L-lysine biosynthesis via DAP pathway; (S)-tetrahydrodipicolinate from L-aspartate: step 4/4. Functionally, catalyzes the conversion of 4-hydroxy-tetrahydrodipicolinate (HTPA) to tetrahydrodipicolinate. This Afipia carboxidovorans (strain ATCC 49405 / DSM 1227 / KCTC 32145 / OM5) (Oligotropha carboxidovorans) protein is 4-hydroxy-tetrahydrodipicolinate reductase.